Consider the following 31-residue polypeptide: Cytochrome b6-f complex subunit 6 (31 aa).

A helical transmembrane segment spans residues 4–24; it reads ITSYFGFLLAALTITSVLFIG.

This sequence belongs to the PetL family. The 4 large subunits of the cytochrome b6-f complex are cytochrome b6, subunit IV (17 kDa polypeptide, PetD), cytochrome f and the Rieske protein, while the 4 small subunits are PetG, PetL, PetM and PetN. The complex functions as a dimer.

The protein resides in the plastid. The protein localises to the chloroplast thylakoid membrane. Component of the cytochrome b6-f complex, which mediates electron transfer between photosystem II (PSII) and photosystem I (PSI), cyclic electron flow around PSI, and state transitions. PetL is important for photoautotrophic growth as well as for electron transfer efficiency and stability of the cytochrome b6-f complex. The polypeptide is Cytochrome b6-f complex subunit 6 (Lepidium virginicum (Virginia pepperweed)).